The primary structure comprises 148 residues: UPF0756 membrane protein NMC1845 (148 aa).

A run of 4 helical transmembrane segments spans residues 13–35 (LILLGVVSNNNSITISATILLLM), 50–70 (HGLNLGIILLTIGVLSPLVSG), 80–100 (FLNFKMISAVFIGIFVAWLAG), and 121–141 (VIGVAFMGGIPVGPLIAAGIL).

This sequence belongs to the UPF0756 family.

It localises to the cell membrane. This Neisseria meningitidis serogroup C / serotype 2a (strain ATCC 700532 / DSM 15464 / FAM18) protein is UPF0756 membrane protein NMC1845.